A 108-amino-acid polypeptide reads, in one-letter code: UPF0145 protein YjfJ (108 aa).

Belongs to the UPF0145 family.

This chain is UPF0145 protein YjfJ (yjfJ), found in Lactococcus lactis subsp. lactis (strain IL1403) (Streptococcus lactis).